A 73-amino-acid chain; its full sequence is Translation initiation factor IF-1 (73 aa).

The region spanning 1–73 (MAKKDGAIEV…SRGRIVYRYK (73 aa)) is the S1-like domain.

The protein belongs to the IF-1 family. In terms of assembly, component of the 30S ribosomal translation pre-initiation complex which assembles on the 30S ribosome in the order IF-2 and IF-3, IF-1 and N-formylmethionyl-tRNA(fMet); mRNA recruitment can occur at any time during PIC assembly.

The protein localises to the cytoplasm. Its function is as follows. One of the essential components for the initiation of protein synthesis. Stabilizes the binding of IF-2 and IF-3 on the 30S subunit to which N-formylmethionyl-tRNA(fMet) subsequently binds. Helps modulate mRNA selection, yielding the 30S pre-initiation complex (PIC). Upon addition of the 50S ribosomal subunit IF-1, IF-2 and IF-3 are released leaving the mature 70S translation initiation complex. This is Translation initiation factor IF-1 from Mycobacterium avium (strain 104).